A 333-amino-acid polypeptide reads, in one-letter code: Testin-2 (333 aa).

A signal peptide spans 1–17 (MIAVLFLAILCLEVDST). 3 disulfide bridges follow: Cys135–Cys178, Cys169–Cys211, and Cys269–Cys322. Residue Asn173 is glycosylated (N-linked (GlcNAc...) asparagine). Active-site residues include His276 and Asn300.

It belongs to the peptidase C1 family. In terms of tissue distribution, sertoli cells.

The protein resides in the secreted. In Rattus norvegicus (Rat), this protein is Testin-2 (Testin).